The sequence spans 71 residues: Sec-independent protein translocase protein TatA (71 aa).

Residues 1–21 form a helical membrane-spanning segment; it reads MGASPVQLLIVLFIAVLVFGG.

This sequence belongs to the TatA/E family. In terms of assembly, the Tat system comprises two distinct complexes: a TatABC complex, containing multiple copies of TatA, TatB and TatC subunits, and a separate TatA complex, containing only TatA subunits. Substrates initially bind to the TatABC complex, which probably triggers association of the separate TatA complex to form the active translocon.

It localises to the cell inner membrane. Part of the twin-arginine translocation (Tat) system that transports large folded proteins containing a characteristic twin-arginine motif in their signal peptide across membranes. TatA could form the protein-conducting channel of the Tat system. This chain is Sec-independent protein translocase protein TatA, found in Dichelobacter nodosus (strain VCS1703A).